Reading from the N-terminus, the 306-residue chain is Deoxyribokinase (306 aa).

Substrate is bound by residues 10-12 (MVD), 38-42 (GKGAN), and Glu139. Residues Asn184 and 220–225 (TMGEKG) each bind ATP. K(+)-binding residues include Asp246 and Ser248. 251-252 (GD) contacts ATP. Substrate is bound at residue Asp252. The Proton acceptor role is filled by Asp252. Residues Ser282, Gly285, Gly287, and Ser291 each contribute to the K(+) site.

Belongs to the carbohydrate kinase PfkB family. Deoxyribokinase subfamily. In terms of assembly, homodimer. It depends on Mg(2+) as a cofactor.

It localises to the cytoplasm. The catalysed reaction is 2-deoxy-D-ribose + ATP = 2-deoxy-D-ribose 5-phosphate + ADP + H(+). Catalyzes the ATP-dependent phosphorylation of 2-deoxy-D-ribose to 2-deoxy-D-ribose 5-phosphate (dRib-5P), allowing the use of deoxyribose as the sole carbon source. Can also use D-ribose, with much lower efficiency. The protein is Deoxyribokinase of Salmonella typhi.